The following is a 265-amino-acid chain: RING finger protein 208 (265 aa).

The tract at residues 83 to 106 (MPTLEGASHTPPLPRRPRKGSSEL) is disordered. Position 103 is a phosphoserine (Ser103). The segment at 147–194 (CPTCGHTYNVTQRRPRVLSCLHSVCEQCLQILYESCPKYKFISCPTCH) adopts an RING-type zinc-finger fold.

This is RING finger protein 208 (Rnf208) from Mus musculus (Mouse).